Reading from the N-terminus, the 103-residue chain is Large ribosomal subunit protein bL21 (103 aa).

The protein belongs to the bacterial ribosomal protein bL21 family. As to quaternary structure, part of the 50S ribosomal subunit. Contacts protein L20.

Functionally, this protein binds to 23S rRNA in the presence of protein L20. The chain is Large ribosomal subunit protein bL21 from Salmonella agona (strain SL483).